Here is a 107-residue protein sequence, read N- to C-terminus: MIKQITERFTPRQYLAEFLLGLTALFGLYLIVAWSSYTPLDNSWATVSAYGNTINKVGSFGAWIIDLFFVFLGYVAHIIPFTAFLVPIYLLKTKAVKQLSCTRIILR.

Helical transmembrane passes span Y14–W34 and F68–I88.

It is found in the cell membrane. This is an uncharacterized protein from Haemophilus influenzae (strain ATCC 51907 / DSM 11121 / KW20 / Rd).